A 146-amino-acid polypeptide reads, in one-letter code: Large ribosomal subunit protein uL11 (146 aa).

This sequence belongs to the universal ribosomal protein uL11 family. Part of the ribosomal stalk of the 50S ribosomal subunit. Interacts with L10 and the large rRNA to form the base of the stalk. L10 forms an elongated spine to which L12 dimers bind in a sequential fashion forming a multimeric L10(L12)X complex. In terms of processing, one or more lysine residues are methylated.

Its function is as follows. Forms part of the ribosomal stalk which helps the ribosome interact with GTP-bound translation factors. The chain is Large ribosomal subunit protein uL11 from Salinibacter ruber (strain DSM 13855 / M31).